The sequence spans 162 residues: Ribosomal RNA large subunit methyltransferase H (162 aa).

Residues Leu78, Gly109, and 128–133 each bind S-adenosyl-L-methionine; that span reads LSALTL.

The protein belongs to the RNA methyltransferase RlmH family. Homodimer.

The protein resides in the cytoplasm. The enzyme catalyses pseudouridine(1915) in 23S rRNA + S-adenosyl-L-methionine = N(3)-methylpseudouridine(1915) in 23S rRNA + S-adenosyl-L-homocysteine + H(+). In terms of biological role, specifically methylates the pseudouridine at position 1915 (m3Psi1915) in 23S rRNA. This is Ribosomal RNA large subunit methyltransferase H from Psychrobacter arcticus (strain DSM 17307 / VKM B-2377 / 273-4).